The following is a 41-amino-acid chain: Pathogenesis-related protein (41 aa).

This sequence belongs to the CRISP family.

Probably involved in the defense reaction of plants against pathogens. This chain is Pathogenesis-related protein, found in Cucumis melo (Muskmelon).